A 308-amino-acid chain; its full sequence is Ribosomal protein L11 methyltransferase (308 aa).

Residues Thr148, Gly169, Asp191, and Asn239 each coordinate S-adenosyl-L-methionine.

Belongs to the methyltransferase superfamily. PrmA family.

The protein resides in the cytoplasm. It catalyses the reaction L-lysyl-[protein] + 3 S-adenosyl-L-methionine = N(6),N(6),N(6)-trimethyl-L-lysyl-[protein] + 3 S-adenosyl-L-homocysteine + 3 H(+). Its function is as follows. Methylates ribosomal protein L11. This chain is Ribosomal protein L11 methyltransferase, found in Psychrobacter cryohalolentis (strain ATCC BAA-1226 / DSM 17306 / VKM B-2378 / K5).